The following is a 459-amino-acid chain: uncharacterized protein (459 aa).

The 59-residue stretch at 5 to 63 (PVEEGQKFPLTIRRMGINGEGIGYFKKAVVFVPGAITGEEVVVEAVKVRDRFTEAKLNK) folds into the TRAM domain. [4Fe-4S] cluster-binding residues include cysteine 76, cysteine 82, cysteine 85, and cysteine 166. Glutamine 290, tyrosine 319, aspartate 340, and aspartate 388 together coordinate S-adenosyl-L-methionine. The active-site Nucleophile is the cysteine 415.

This sequence belongs to the class I-like SAM-binding methyltransferase superfamily. RNA M5U methyltransferase family.

This is an uncharacterized protein from Listeria monocytogenes serotype 4b (strain F2365).